The primary structure comprises 428 residues: Histidine--tRNA ligase (428 aa).

The protein belongs to the class-II aminoacyl-tRNA synthetase family. In terms of assembly, homodimer.

The protein resides in the cytoplasm. It catalyses the reaction tRNA(His) + L-histidine + ATP = L-histidyl-tRNA(His) + AMP + diphosphate + H(+). The polypeptide is Histidine--tRNA ligase (Chlamydia trachomatis serovar A (strain ATCC VR-571B / DSM 19440 / HAR-13)).